Here is a 503-residue protein sequence, read N- to C-terminus: Alpha-1,3/1,6-mannosyltransferase ALG2 (503 aa).

2 consecutive transmembrane segments (helical) span residues 64–84 (VYGD…FATI) and 112–132 (TCIP…CHFP). N-linked (GlcNAc...) asparagine glycosylation is found at Asn-170, Asn-303, Asn-371, and Asn-400. A helical transmembrane segment spans residues 443 to 463 (WEIFGISFSNFILHMAFIKIL).

This sequence belongs to the glycosyltransferase group 1 family. Glycosyltransferase 4 subfamily. In terms of assembly, interacts with ALG1.

It is found in the endoplasmic reticulum membrane. The catalysed reaction is a beta-D-Man-(1-&gt;4)-beta-D-GlcNAc-(1-&gt;4)-alpha-D-GlcNAc-diphospho-di-trans,poly-cis-dolichol + GDP-alpha-D-mannose = an alpha-D-Man-(1-&gt;3)-beta-D-Man-(1-&gt;4)-beta-D-GlcNAc-(1-&gt;4)-alpha-D-GlcNAc-diphospho-di-trans,poly-cis-dolichol + GDP + H(+). It catalyses the reaction an alpha-D-Man-(1-&gt;3)-beta-D-Man-(1-&gt;4)-beta-D-GlcNAc-(1-&gt;4)-alpha-D-GlcNAc-diphospho-di-trans,poly-cis-dolichol + GDP-alpha-D-mannose = an alpha-D-Man-(1-&gt;3)-[alpha-D-Man-(1-&gt;6)]-beta-D-Man-(1-&gt;4)-beta-D-GlcNAc-(1-&gt;4)-alpha-D-GlcNAc-diphospho-di-trans,poly-cis-dolichol + GDP + H(+). It functions in the pathway protein modification; protein glycosylation. Its function is as follows. Mannosylates Man(2)GlcNAc(2)-dolichol diphosphate and Man(1)GlcNAc(2)-dolichol diphosphate to form Man(3)GlcNAc(2)-dolichol diphosphate. The polypeptide is Alpha-1,3/1,6-mannosyltransferase ALG2 (ALG2) (Saccharomyces cerevisiae (strain ATCC 204508 / S288c) (Baker's yeast)).